Here is a 436-residue protein sequence, read N- to C-terminus: uncharacterized protein (436 aa).

The next 12 helical transmembrane spans lie at 38 to 58 (ILIF…TVGA), 70 to 90 (VAGI…LLIG), 102 to 122 (LAGG…AALI), 125 to 145 (VALL…NLQV), 160 to 180 (TAAS…PNLV), 197 to 217 (GPFI…LIFL), 254 to 274 (IMVG…IMTM), 291 to 311 (LVIG…GLLV), 319 to 339 (MAIA…IAPA), 342 to 362 (LSLL…GLLT), 383 to 403 (FDVL…MVVA), and 409 to 429 (ILSI…IWYF).

This sequence belongs to the major facilitator superfamily.

The protein resides in the cell membrane. This is an uncharacterized protein from Bacillus subtilis (strain 168).